The chain runs to 183 residues: Endoribonuclease YbeY (183 aa).

Residues His142, His146, and His152 each contribute to the Zn(2+) site.

Belongs to the endoribonuclease YbeY family. Zn(2+) serves as cofactor.

It localises to the cytoplasm. Functionally, single strand-specific metallo-endoribonuclease involved in late-stage 70S ribosome quality control and in maturation of the 3' terminus of the 16S rRNA. The chain is Endoribonuclease YbeY from Trichodesmium erythraeum (strain IMS101).